The primary structure comprises 295 residues: UDP-N-acetylenolpyruvoylglucosamine reductase (295 aa).

In terms of domain architecture, FAD-binding PCMH-type spans 24–188 (KVGGNAEIFF…LKAIFKANKG (165 aa)). R168 is an active-site residue. The Proton donor role is filled by S217. Residue E287 is part of the active site.

The protein belongs to the MurB family. Requires FAD as cofactor.

Its subcellular location is the cytoplasm. The enzyme catalyses UDP-N-acetyl-alpha-D-muramate + NADP(+) = UDP-N-acetyl-3-O-(1-carboxyvinyl)-alpha-D-glucosamine + NADPH + H(+). The protein operates within cell wall biogenesis; peptidoglycan biosynthesis. Cell wall formation. This is UDP-N-acetylenolpyruvoylglucosamine reductase from Rickettsia typhi (strain ATCC VR-144 / Wilmington).